Reading from the N-terminus, the 80-residue chain is Cell division activator CedA (80 aa).

The protein belongs to the CedA family.

Functionally, activates the cell division inhibited by chromosomal DNA over-replication. This chain is Cell division activator CedA, found in Escherichia coli (strain SMS-3-5 / SECEC).